A 99-amino-acid polypeptide reads, in one-letter code: Ubiquitin-related modifier 1 homolog (99 aa).

1-thioglycine is present on Gly99. Residue Gly99 forms a Glycyl lysine isopeptide (Gly-Lys) (interchain with K-? in acceptor proteins) linkage.

Belongs to the URM1 family. Interacts with cer. C-terminal thiocarboxylation occurs in 2 steps, it is first acyl-adenylated (-COAMP) via the hesA/moeB/thiF part of the MOCS3 homolog, then thiocarboxylated (-COSH) via the rhodanese domain of the MOCS3 homolog.

The protein resides in the cytoplasm. It functions in the pathway tRNA modification; 5-methoxycarbonylmethyl-2-thiouridine-tRNA biosynthesis. Its function is as follows. Acts as a sulfur carrier required for 2-thiolation of mcm(5)S(2)U at tRNA wobble positions of cytosolic tRNA(Lys), tRNA(Glu) and tRNA(Gln). Serves as sulfur donor in tRNA 2-thiolation reaction by being thiocarboxylated (-COSH) at its C-terminus by MOCS3. The sulfur is then transferred to tRNA to form 2-thiolation of mcm(5)S(2)U. Also acts as a ubiquitin-like protein (UBL) that is covalently conjugated via an isopeptide bond to lysine residues of target proteins such as Prx2/Jafrac1, Ciao1, Eip71CD and GILT1. The thiocarboxylated form serves as substrate for conjugation and oxidative stress specifically induces the formation of UBL-protein conjugates. The chain is Ubiquitin-related modifier 1 homolog from Drosophila virilis (Fruit fly).